The primary structure comprises 140 residues: Putative pre-16S rRNA nuclease (140 aa).

The protein belongs to the YqgF nuclease family.

Its subcellular location is the cytoplasm. Functionally, could be a nuclease involved in processing of the 5'-end of pre-16S rRNA. This is Putative pre-16S rRNA nuclease from Yersinia pseudotuberculosis serotype IB (strain PB1/+).